We begin with the raw amino-acid sequence, 302 residues long: MSEKTDLSELRRGTELVKRGFARMQKGGVIMDVVDAEQARIAEDAGAVAVMALESVPADIRKRGGVARMPDPDIVPEIIDEVSIPAMGKSRIGHTKEAEILESLGVDMIDESEVLTPADDRYHIDKRHFTAPFVCGARNLQEALRRIDEGAAMIRTKGEAGTGDVNQAVHHQRNIKSSIRELVGKSYEERERWARDHEAPAELVHETAEMGRLPVVNFAAGGIATPADAALMMHHGCDGIFVGSGVFGAENPRAMGRAIVEAVNNWDDPDELAQIASNPGKGMKGEANADLSEGEKLQTRGV.

Position 32 (Asp-32) interacts with D-ribose 5-phosphate. Lys-89 (schiff-base intermediate with D-ribose 5-phosphate) is an active-site residue. D-ribose 5-phosphate is bound at residue Gly-161. D-glyceraldehyde 3-phosphate is bound at residue Arg-173. D-ribose 5-phosphate contacts are provided by residues Gly-222 and Gly-243–Ser-244. The interval Ala-276 to Val-302 is disordered. Residues Glu-293 to Val-302 are compositionally biased toward basic and acidic residues.

It belongs to the PdxS/SNZ family. In terms of assembly, in the presence of PdxT, forms a dodecamer of heterodimers.

It catalyses the reaction aldehydo-D-ribose 5-phosphate + D-glyceraldehyde 3-phosphate + L-glutamine = pyridoxal 5'-phosphate + L-glutamate + phosphate + 3 H2O + H(+). It participates in cofactor biosynthesis; pyridoxal 5'-phosphate biosynthesis. Functionally, catalyzes the formation of pyridoxal 5'-phosphate from ribose 5-phosphate (RBP), glyceraldehyde 3-phosphate (G3P) and ammonia. The ammonia is provided by the PdxT subunit. Can also use ribulose 5-phosphate and dihydroxyacetone phosphate as substrates, resulting from enzyme-catalyzed isomerization of RBP and G3P, respectively. This Haloquadratum walsbyi (strain DSM 16790 / HBSQ001) protein is Pyridoxal 5'-phosphate synthase subunit PdxS.